The sequence spans 827 residues: Leucine--tRNA ligase (827 aa).

A 'HIGH' region motif is present at residues 42 to 52 (PYPSGKLHMGH). The short motif at 583 to 587 (KMSKS) is the 'KMSKS' region element. Residue Lys586 participates in ATP binding.

Belongs to the class-I aminoacyl-tRNA synthetase family.

It is found in the cytoplasm. It catalyses the reaction tRNA(Leu) + L-leucine + ATP = L-leucyl-tRNA(Leu) + AMP + diphosphate. The chain is Leucine--tRNA ligase from Pelotomaculum thermopropionicum (strain DSM 13744 / JCM 10971 / SI).